Consider the following 87-residue polypeptide: U3-theraphotoxin-Hhn1a 2 (87 aa).

A signal peptide spans 1 to 24; the sequence is MVNMKASMFLTFAGLVLLFVVCYA. A propeptide spanning residues 25–52 is cleaved from the precursor; sequence SESEEKEFPKEMLSSIFAVDDDFKQEER. Intrachain disulfides connect Cys-54/Cys-67, Cys-61/Cys-72, and Cys-66/Cys-79.

The protein belongs to the neurotoxin 10 (Hwtx-1) family. 51 (Hntx-8) subfamily. Hntx-8 sub-subfamily. In terms of tissue distribution, expressed by the venom gland.

The protein resides in the secreted. Its function is as follows. Ion channel inhibitor. The chain is U3-theraphotoxin-Hhn1a 2 from Cyriopagopus hainanus (Chinese bird spider).